The primary structure comprises 396 residues: S-adenosylmethionine synthase (396 aa).

ATP is bound at residue histidine 16. Aspartate 18 contacts Mg(2+). Glutamate 44 serves as a coordination point for K(+). Residues glutamate 57 and glutamine 100 each coordinate L-methionine. A flexible loop region spans residues 100-110; sequence QSKDIALGVDK. Residues 176–178, 243–244, aspartate 252, 258–259, alanine 275, and lysine 279 contribute to the ATP site; these read DGK, RF, and RK. Position 252 (aspartate 252) interacts with L-methionine. An L-methionine-binding site is contributed by lysine 283.

This sequence belongs to the AdoMet synthase family. In terms of assembly, homotetramer; dimer of dimers. Requires Mg(2+) as cofactor. The cofactor is K(+).

It localises to the cytoplasm. It carries out the reaction L-methionine + ATP + H2O = S-adenosyl-L-methionine + phosphate + diphosphate. The protein operates within amino-acid biosynthesis; S-adenosyl-L-methionine biosynthesis; S-adenosyl-L-methionine from L-methionine: step 1/1. In terms of biological role, catalyzes the formation of S-adenosylmethionine (AdoMet) from methionine and ATP. The overall synthetic reaction is composed of two sequential steps, AdoMet formation and the subsequent tripolyphosphate hydrolysis which occurs prior to release of AdoMet from the enzyme. The sequence is that of S-adenosylmethionine synthase from Lachnoclostridium phytofermentans (strain ATCC 700394 / DSM 18823 / ISDg) (Clostridium phytofermentans).